The following is a 377-amino-acid chain: Chaperone protein DnaJ (377 aa).

Positions Asp5 to Gly70 constitute a J domain. A CR-type zinc finger spans residues Gly138–Glu216. Residues Cys151, Cys154, Cys168, Cys171, Cys190, Cys193, Cys204, and Cys207 each contribute to the Zn(2+) site. CXXCXGXG motif repeat units lie at residues Cys151 to Gly158, Cys168 to Gly175, Cys190 to Gly197, and Cys204 to Gly211.

This sequence belongs to the DnaJ family. In terms of assembly, homodimer. It depends on Zn(2+) as a cofactor.

It is found in the cytoplasm. Participates actively in the response to hyperosmotic and heat shock by preventing the aggregation of stress-denatured proteins and by disaggregating proteins, also in an autonomous, DnaK-independent fashion. Unfolded proteins bind initially to DnaJ; upon interaction with the DnaJ-bound protein, DnaK hydrolyzes its bound ATP, resulting in the formation of a stable complex. GrpE releases ADP from DnaK; ATP binding to DnaK triggers the release of the substrate protein, thus completing the reaction cycle. Several rounds of ATP-dependent interactions between DnaJ, DnaK and GrpE are required for fully efficient folding. Also involved, together with DnaK and GrpE, in the DNA replication of plasmids through activation of initiation proteins. This is Chaperone protein DnaJ from Agrobacterium fabrum (strain C58 / ATCC 33970) (Agrobacterium tumefaciens (strain C58)).